Reading from the N-terminus, the 121-residue chain is MSRVKRGVTARARHKKVLNQAKGYYGARSRVYRVAKQAVIKAGQYAYRDRKVKKRTFRSLWIVRINAAARQHDISYSQLINGLNKAGVELDRKALAELAVYNKDAFAAVVEKAKAALAYII.

The protein belongs to the bacterial ribosomal protein bL20 family.

Binds directly to 23S ribosomal RNA and is necessary for the in vitro assembly process of the 50S ribosomal subunit. It is not involved in the protein synthesizing functions of that subunit. The polypeptide is Large ribosomal subunit protein bL20 (Francisella tularensis subsp. mediasiatica (strain FSC147)).